The sequence spans 616 residues: UPF0329 protein ECU02_1540 (616 aa).

2 stretches are compositionally biased toward basic and acidic residues: residues 350-359 and 369-381; these read EREKREESKG and GAGE…KEED. The segment at 350–427 is disordered; the sequence is EREKREESKG…RKGDGHHYKI (78 aa). A compositionally biased stretch (acidic residues) spans 382–396; the sequence is GKEEEGVEAEEEESA. The span at 408 to 427 shows a compositional bias: basic residues; that stretch reads ARRKKSLKGKRKGDGHHYKI.

This sequence belongs to the UPF0329 family.

The sequence is that of UPF0329 protein ECU02_1540 from Encephalitozoon cuniculi (strain GB-M1) (Microsporidian parasite).